The following is a 307-amino-acid chain: Elongation factor Ts (307 aa).

Positions 80–83 are involved in Mg(2+) ion dislocation from EF-Tu; sequence TDFV.

It belongs to the EF-Ts family.

The protein resides in the cytoplasm. Functionally, associates with the EF-Tu.GDP complex and induces the exchange of GDP to GTP. It remains bound to the aminoacyl-tRNA.EF-Tu.GTP complex up to the GTP hydrolysis stage on the ribosome. In Methylobacterium nodulans (strain LMG 21967 / CNCM I-2342 / ORS 2060), this protein is Elongation factor Ts.